A 231-amino-acid polypeptide reads, in one-letter code: Octanoyltransferase (231 aa).

The 203-residue stretch at 29–231 (PQDPDLLWLC…GRQLCIWLAP (203 aa)) folds into the BPL/LPL catalytic domain. Substrate contacts are provided by residues 68–75 (RGGQVTFH), 164–166 (ALG), and 177–179 (GVA). Cys195 functions as the Acyl-thioester intermediate in the catalytic mechanism.

The protein belongs to the LipB family.

It localises to the cytoplasm. The catalysed reaction is octanoyl-[ACP] + L-lysyl-[protein] = N(6)-octanoyl-L-lysyl-[protein] + holo-[ACP] + H(+). The protein operates within protein modification; protein lipoylation via endogenous pathway; protein N(6)-(lipoyl)lysine from octanoyl-[acyl-carrier-protein]: step 1/2. Functionally, catalyzes the transfer of endogenously produced octanoic acid from octanoyl-acyl-carrier-protein onto the lipoyl domains of lipoate-dependent enzymes. Lipoyl-ACP can also act as a substrate although octanoyl-ACP is likely to be the physiological substrate. The sequence is that of Octanoyltransferase from Verminephrobacter eiseniae (strain EF01-2).